Here is a 344-residue protein sequence, read N- to C-terminus: Fructose-1,6-bisphosphatase class 1 (344 aa).

Mg(2+)-binding residues include Glu-107, Asp-129, Leu-131, and Asp-132. The substrate site is built by Asn-224, Tyr-252, and Lys-282. Glu-288 is a Mg(2+) binding site.

Belongs to the FBPase class 1 family. In terms of assembly, homotetramer. It depends on Mg(2+) as a cofactor.

It localises to the cytoplasm. The catalysed reaction is beta-D-fructose 1,6-bisphosphate + H2O = beta-D-fructose 6-phosphate + phosphate. It functions in the pathway carbohydrate biosynthesis; Calvin cycle. The protein is Fructose-1,6-bisphosphatase class 1 of Synechococcus sp. (strain ATCC 27144 / PCC 6301 / SAUG 1402/1) (Anacystis nidulans).